The following is a 662-amino-acid chain: DNA topoisomerase 4 subunit B (662 aa).

Residues Tyr20, Asn60, Asp87, 129–135 (GLHGVGI), and Lys359 each bind ATP. A Toprim domain is found at 439–553 (TELFIVEGDS…EGHLYLAKPP (115 aa)). The Mg(2+) site is built by Glu445, Asp518, and Asp520.

This sequence belongs to the type II topoisomerase family. ParE type 1 subfamily. As to quaternary structure, heterotetramer composed of ParC and ParE. Requires Mg(2+) as cofactor. Mn(2+) is required as a cofactor. Ca(2+) serves as cofactor.

The enzyme catalyses ATP-dependent breakage, passage and rejoining of double-stranded DNA.. Topoisomerase IV is essential for chromosome segregation. It relaxes supercoiled DNA. Performs the decatenation events required during the replication of a circular DNA molecule. This is DNA topoisomerase 4 subunit B from Rickettsia prowazekii (strain Madrid E).